Reading from the N-terminus, the 291-residue chain is Glutamate racemase (291 aa).

Residues 12–13 (DS) and 44–45 (YG) contribute to the substrate site. Residue cysteine 75 is the Proton donor/acceptor of the active site. A substrate-binding site is contributed by 76–77 (NT). The active-site Proton donor/acceptor is the cysteine 187. 188–189 (TH) is a binding site for substrate. The segment covering 234-247 (ATQAAGARAQMAPS) has biased composition (low complexity). Residues 234 to 257 (ATQAAGARAQMAPSAPEPKEGTPD) are disordered.

The protein belongs to the aspartate/glutamate racemases family.

The catalysed reaction is L-glutamate = D-glutamate. It functions in the pathway cell wall biogenesis; peptidoglycan biosynthesis. In terms of biological role, provides the (R)-glutamate required for cell wall biosynthesis. The chain is Glutamate racemase from Koribacter versatilis (strain Ellin345).